A 423-amino-acid polypeptide reads, in one-letter code: Adenylosuccinate synthetase (423 aa).

D12 (proton acceptor) is an active-site residue. Residues D12 and G39 each contribute to the Mg(2+) site. IMP-binding positions include 37–40 (NAGH), T129, R143, N221, T236, and R300. 39 to 41 (GHS) is a GTP binding site. Catalysis depends on H40, which acts as the Proton donor. 296–302 (VSTGRKR) is a binding site for substrate. GTP-binding positions include R302, 328-330 (KLD), and 412-414 (GTG).

It belongs to the adenylosuccinate synthetase family. Homodimer. Mg(2+) is required as a cofactor.

The protein resides in the cytoplasm. The catalysed reaction is IMP + L-aspartate + GTP = N(6)-(1,2-dicarboxyethyl)-AMP + GDP + phosphate + 2 H(+). It functions in the pathway purine metabolism; AMP biosynthesis via de novo pathway; AMP from IMP: step 1/2. Plays an important role in the de novo pathway and in the salvage pathway of purine nucleotide biosynthesis. Catalyzes the first committed step in the biosynthesis of AMP from IMP. The polypeptide is Adenylosuccinate synthetase (Pyricularia oryzae (strain 70-15 / ATCC MYA-4617 / FGSC 8958) (Rice blast fungus)).